Here is a 481-residue protein sequence, read N- to C-terminus: ADAMTS-like protein 5 (481 aa).

Positions 1–42 (MGKLRPGRVEWLASGHTERPHLFQNLLLFLWALLNCGLGVSA) are cleaved as a signal peptide. Residues 45–97 (PGEWTPWVSWTRCSSSCGRGVSVRSRRCLRLPGEEPCWGDSHEYRLCQLPDCP) enclose the TSP type-1 domain. 3 disulfides stabilise this stretch: Cys-57–Cys-91, Cys-61–Cys-96, and Cys-72–Cys-81. The N-linked (GlcNAc...) asparagine glycan is linked to Asn-218. Residues 331 to 361 (QPQPRGVEPQPPAAPAVTPAQTPTLAPDPCP) are disordered. Low complexity predominate over residues 345–355 (PAVTPAQTPTL). 3 disulfides stabilise this stretch: Cys-360–Cys-425, Cys-363–Cys-427, and Cys-377–Cys-479. Residues 360–479 (CPPCPDTRGR…SRIRLTARRC (120 aa)) form the NTR domain.

Interacts with heparin, FBN1 and FBN2. Proteolytically cleaved to release a C-terminal fragment containing the NTR domain. In terms of processing, contains at least one additional N-linked glycosylation site.

The protein localises to the secreted. The protein resides in the extracellular space. It is found in the extracellular matrix. May play a role in modulation of fibrillin microfibrils in the extracellular matrix (ECM). This Homo sapiens (Human) protein is ADAMTS-like protein 5 (ADAMTSL5).